Reading from the N-terminus, the 396-residue chain is MRRLFTSESVTEGHPDKMADQISDAILDAIIEQDPKARVAVETLLTTGVAIVAGEVTTKAYVDVQDIVRKTVLDIGYTRAKYGFDGETCAVLSSIHSQSPDIALGVNEAAEFKQGDKAEDEIEKVGAGDQGMMFGYATNETEELMPLPIMLAHKLAMKLAEVRKNGTVPFLRPDGKTQVTIEYDENEKPVRVDTVLISTQHEPDVTIPEIREALVKYVINPIIPENLRDDNMKILVNPTGRFVLGGPSADTGLTGRKIIVDTYGGAIPHGGGAFSGKDPTKVDRSAHYFARYVAKNVVAAGLADKFMIQVAYAIGVARPVSIMINTFGTAKVDEEKLRKVVEEIFDFRPGAIIKKLDLLRPIYRKTAAYGHFGRNDPDFTWERTDMVRELKAAFNL.

His-14 lines the ATP pocket. Asp-16 lines the Mg(2+) pocket. Glu-42 provides a ligand contact to K(+). Residues Glu-55 and Gln-98 each contribute to the L-methionine site. Residues 98–108 form a flexible loop region; sequence QSPDIALGVNE. Residues 174-176, 241-242, Asp-250, 256-257, Ala-273, and Lys-277 each bind ATP; these read DGK, RF, and RK. Asp-250 serves as a coordination point for L-methionine. Position 281 (Lys-281) interacts with L-methionine.

The protein belongs to the AdoMet synthase family. As to quaternary structure, homotetramer; dimer of dimers. Requires Mg(2+) as cofactor. K(+) is required as a cofactor.

The protein localises to the cytoplasm. It catalyses the reaction L-methionine + ATP + H2O = S-adenosyl-L-methionine + phosphate + diphosphate. It participates in amino-acid biosynthesis; S-adenosyl-L-methionine biosynthesis; S-adenosyl-L-methionine from L-methionine: step 1/1. Functionally, catalyzes the formation of S-adenosylmethionine (AdoMet) from methionine and ATP. The overall synthetic reaction is composed of two sequential steps, AdoMet formation and the subsequent tripolyphosphate hydrolysis which occurs prior to release of AdoMet from the enzyme. This is S-adenosylmethionine synthase from Fervidobacterium nodosum (strain ATCC 35602 / DSM 5306 / Rt17-B1).